The chain runs to 308 residues: Transaldolase (308 aa).

The active-site Schiff-base intermediate with substrate is the lysine 125.

Belongs to the transaldolase family. Type 1 subfamily. In terms of assembly, homodimer.

It is found in the cytoplasm. The enzyme catalyses D-sedoheptulose 7-phosphate + D-glyceraldehyde 3-phosphate = D-erythrose 4-phosphate + beta-D-fructose 6-phosphate. It participates in carbohydrate degradation; pentose phosphate pathway; D-glyceraldehyde 3-phosphate and beta-D-fructose 6-phosphate from D-ribose 5-phosphate and D-xylulose 5-phosphate (non-oxidative stage): step 2/3. Transaldolase is important for the balance of metabolites in the pentose-phosphate pathway. The protein is Transaldolase of Pseudomonas fluorescens (strain ATCC BAA-477 / NRRL B-23932 / Pf-5).